Reading from the N-terminus, the 202-residue chain is Small ribosomal subunit protein uS4 (202 aa).

The tract at residues 22–43 (TRKSARRAYPPGQHGQNRKKRS) is disordered. Residues 90-152 (MRLDNTVFRL…AQSRKLVEAN (63 aa)) form the S4 RNA-binding domain.

It belongs to the universal ribosomal protein uS4 family. As to quaternary structure, part of the 30S ribosomal subunit. Contacts protein S5. The interaction surface between S4 and S5 is involved in control of translational fidelity.

One of the primary rRNA binding proteins, it binds directly to 16S rRNA where it nucleates assembly of the body of the 30S subunit. Functionally, with S5 and S12 plays an important role in translational accuracy. The chain is Small ribosomal subunit protein uS4 from Nostoc punctiforme (strain ATCC 29133 / PCC 73102).